Reading from the N-terminus, the 413-residue chain is Multifunctional CCA protein (413 aa).

Gly-8 and Arg-11 together coordinate ATP. Positions 8 and 11 each coordinate CTP. Asp-21 and Asp-23 together coordinate Mg(2+). Positions 91, 137, and 140 each coordinate ATP. Residues Arg-91, Arg-137, and Arg-140 each contribute to the CTP site. The HD domain occupies 228–329; sequence TGIHTLMTLS…VKLFDNIDAW (102 aa).

The protein belongs to the tRNA nucleotidyltransferase/poly(A) polymerase family. Bacterial CCA-adding enzyme type 1 subfamily. Monomer. Can also form homodimers and oligomers. Mg(2+) is required as a cofactor. Requires Ni(2+) as cofactor.

It carries out the reaction a tRNA precursor + 2 CTP + ATP = a tRNA with a 3' CCA end + 3 diphosphate. The catalysed reaction is a tRNA with a 3' CCA end + 2 CTP + ATP = a tRNA with a 3' CCACCA end + 3 diphosphate. Functionally, catalyzes the addition and repair of the essential 3'-terminal CCA sequence in tRNAs without using a nucleic acid template. Adds these three nucleotides in the order of C, C, and A to the tRNA nucleotide-73, using CTP and ATP as substrates and producing inorganic pyrophosphate. tRNA 3'-terminal CCA addition is required both for tRNA processing and repair. Also involved in tRNA surveillance by mediating tandem CCA addition to generate a CCACCA at the 3' terminus of unstable tRNAs. While stable tRNAs receive only 3'-terminal CCA, unstable tRNAs are marked with CCACCA and rapidly degraded. In Enterobacter sp. (strain 638), this protein is Multifunctional CCA protein.